Reading from the N-terminus, the 470-residue chain is UDP-N-acetylmuramate--L-alanine ligase (470 aa).

114–120 contacts ATP; sequence GTHGKTT.

Belongs to the MurCDEF family.

It is found in the cytoplasm. The enzyme catalyses UDP-N-acetyl-alpha-D-muramate + L-alanine + ATP = UDP-N-acetyl-alpha-D-muramoyl-L-alanine + ADP + phosphate + H(+). It functions in the pathway cell wall biogenesis; peptidoglycan biosynthesis. Functionally, cell wall formation. In Xanthobacter autotrophicus (strain ATCC BAA-1158 / Py2), this protein is UDP-N-acetylmuramate--L-alanine ligase.